A 448-amino-acid polypeptide reads, in one-letter code: Integrator complex subunit 15 (448 aa).

This sequence belongs to the Integrator subunit 15 family. As to quaternary structure, component of the Integrator complex, composed of core subunits INTS1, INTS2, INTS3, INTS4, INTS5, INTS6, INTS7, INTS8, INTS9/RC74, INTS10, INTS11/CPSF3L, INTS12, INTS13, INTS14 and INTS15. The core complex associates with protein phosphatase 2A subunits PPP2CA and PPP2R1A, to form the Integrator-PP2A (INTAC) complex. INTS15 is part of the tail subcomplex, composed of INTS10, INTS13, INTS14 and INTS15.

The protein localises to the nucleus. It localises to the chromosome. In terms of biological role, component of the integrator complex, a multiprotein complex that terminates RNA polymerase II (Pol II) transcription in the promoter-proximal region of genes. The integrator complex provides a quality checkpoint during transcription elongation by driving premature transcription termination of transcripts that are unfavorably configured for transcriptional elongation: the complex terminates transcription by (1) catalyzing dephosphorylation of the C-terminal domain (CTD) of Pol II subunit POLR2A/RPB1 and SUPT5H/SPT5, (2) degrading the exiting nascent RNA transcript via endonuclease activity and (3) promoting the release of Pol II from bound DNA. The integrator complex is also involved in terminating the synthesis of non-coding Pol II transcripts, such as enhancer RNAs (eRNAs), small nuclear RNAs (snRNAs), telomerase RNAs and long non-coding RNAs (lncRNAs). INTS15 is part of the integrator tail module that acts as a platform for the recruitment of transcription factors at promoters. Within the integrator complex, INTS15 is required to bridge different integrator modules. The polypeptide is Integrator complex subunit 15 (Mus musculus (Mouse)).